A 506-amino-acid polypeptide reads, in one-letter code: Asparagine--tRNA ligase (506 aa).

This sequence belongs to the class-II aminoacyl-tRNA synthetase family. As to quaternary structure, homodimer.

It localises to the cytoplasm. It carries out the reaction tRNA(Asn) + L-asparagine + ATP = L-asparaginyl-tRNA(Asn) + AMP + diphosphate + H(+). In Onion yellows phytoplasma (strain OY-M), this protein is Asparagine--tRNA ligase.